The sequence spans 365 residues: Chorismate synthase (365 aa).

An NADP(+)-binding site is contributed by Arg-48. Residues Arg-125–Ser-127, Gly-286, Lys-301–Ser-305, and Arg-328 contribute to the FMN site.

This sequence belongs to the chorismate synthase family. FMNH2 serves as cofactor.

The enzyme catalyses 5-O-(1-carboxyvinyl)-3-phosphoshikimate = chorismate + phosphate. It participates in metabolic intermediate biosynthesis; chorismate biosynthesis; chorismate from D-erythrose 4-phosphate and phosphoenolpyruvate: step 7/7. Functionally, catalyzes the anti-1,4-elimination of the C-3 phosphate and the C-6 proR hydrogen from 5-enolpyruvylshikimate-3-phosphate (EPSP) to yield chorismate, which is the branch point compound that serves as the starting substrate for the three terminal pathways of aromatic amino acid biosynthesis. This reaction introduces a second double bond into the aromatic ring system. In Methanosphaera stadtmanae (strain ATCC 43021 / DSM 3091 / JCM 11832 / MCB-3), this protein is Chorismate synthase.